The chain runs to 472 residues: MTATSLKTLTPPSKQGLDQNRRSYWITTFGCQMNKADSERMAGILESMGYCEATAELDADLVLYNTCTIRDNAEQKVYSYLGRQAQRKRDNPNLTLVVAGCVAQQEGESLLRRVPELDLVMGPQHANRLETLLQQVDSGQQVVATEEHHILEDITTARRDSAICGWVNVIYGCNERCTYCVVPSVRGQEQSRRPEAIRLEMEGLAAQGFKEITLLGQNIDAYGRDLPGITAEGRREHTLTDLLHHVHDVEGIERLRFATSHPRYFTERLIDACADLSKVCEHFHIPFQSGDNALLKSMARGYTVERYRRIIDRIRDRMPDASISADVIVGFPGETDAQYRRTLDLIDEIAFDQVNTAAYSPRPNTPAATWDNQLPESVKVERLKEINALVERNARERNIRYQGRTEEVLAEGINPKDPEQLMGRTRTNRLTFFSATSPDGHLYQPGDLVNVRIDAVRSFSLSGTPLPSNALH.

The MTTase N-terminal domain maps to 22–138 (RSYWITTFGC…LETLLQQVDS (117 aa)). 6 residues coordinate [4Fe-4S] cluster: C31, C67, C101, C173, C177, and C180. In terms of domain architecture, Radical SAM core spans 159–396 (RDSAICGWVN…NALVERNARE (238 aa)). The 69-residue stretch at 399–467 (IRYQGRTEEV…SFSLSGTPLP (69 aa)) folds into the TRAM domain.

Belongs to the methylthiotransferase family. MiaB subfamily. In terms of assembly, monomer. [4Fe-4S] cluster is required as a cofactor.

The protein localises to the cytoplasm. The catalysed reaction is N(6)-dimethylallyladenosine(37) in tRNA + (sulfur carrier)-SH + AH2 + 2 S-adenosyl-L-methionine = 2-methylsulfanyl-N(6)-dimethylallyladenosine(37) in tRNA + (sulfur carrier)-H + 5'-deoxyadenosine + L-methionine + A + S-adenosyl-L-homocysteine + 2 H(+). Functionally, catalyzes the methylthiolation of N6-(dimethylallyl)adenosine (i(6)A), leading to the formation of 2-methylthio-N6-(dimethylallyl)adenosine (ms(2)i(6)A) at position 37 in tRNAs that read codons beginning with uridine. This chain is tRNA-2-methylthio-N(6)-dimethylallyladenosine synthase, found in Synechococcus sp. (strain CC9902).